A 397-amino-acid polypeptide reads, in one-letter code: Serpin B10 (397 aa).

The Nuclear localization signal motif lies at 74–77 (KKRK).

The protein belongs to the serpin family. Ov-serpin subfamily.

The protein localises to the nucleus. Its subcellular location is the cytoplasm. Functionally, protease inhibitor that may play a role in the regulation of protease activities during hematopoiesis and apoptosis induced by TNF. May regulate protease activities in the cytoplasm and in the nucleus. This Mus musculus (Mouse) protein is Serpin B10 (Serpinb10).